Here is a 459-residue protein sequence, read N- to C-terminus: Sperm-tail PG-rich repeat-containing protein 2 (459 aa).

STPGR repeat units follow at residues 21–30, 63–73, 119–148, 157–203, 213–243, 257–268, 351–377, 400–410, and 433–443; these read VGPGSYQVPF, PGPGHYNVSEA, TLGPAYYKPQFDVSNATLKYKGIHFGNSSG, GPGP…QEKK, TPAPGTYNEPRTALKSLKKTSGLKNIPFGQS, PGPGFYNVLNNT, PAPGSYDVHKSYEMSQVKHKYMPPRSL, GPGPAAYNPVL, and TPGPATYEISQ.

The chain is Sperm-tail PG-rich repeat-containing protein 2 (STPG2) from Homo sapiens (Human).